We begin with the raw amino-acid sequence, 416 residues long: Tiggy-winkle hedgehog protein (416 aa).

Positions 1 to 26 (MDVRLHLKQFALLCFISLLLTPCGLA) are cleaved as a signal peptide. Cys-27 carries N-palmitoyl cysteine lipidation. Residues Glu-92, Glu-93, Asp-98, Thr-128, Glu-129, Asp-132, and Asp-134 each contribute to the Ca(2+) site. Zn(2+)-binding residues include His-143, Asp-150, and His-185. Gly-200 carries the Cholesterol glycine ester lipid modification.

Belongs to the hedgehog family. In terms of assembly, multimer. Interacts with HHATL/GUP1 which negatively regulates HHAT-mediated palmitoylation of the TWHH N-terminus. Interacts with BOC and CDON. Interacts with HHIP. Interacts with DISP1 via its cholesterol anchor. Interacts with SCUBE2. In terms of processing, the C-terminal domain displays an autoproteolysis activity and a cholesterol transferase activity. Both activities result in the cleavage of the full-length protein into two parts (N-product and C-product) followed by the covalent attachment of a cholesterol moiety to the C-terminal of the newly generated N-product. Cholesterylation is required for the tiggy-winkle hedgehog protein N-product targeting to lipid rafts and multimerization. N-product is the active species in both local and long-range signaling, whereas the C-product is degraded in the endoplasmic reticulum. N-palmitoylation by HHAT of N-product is required for tiggy-winkle hedgehog protein N-product multimerization and full activity. It is a prerequisite for the membrane-proximal positioning and the subsequent shedding of this N-terminal peptide. Post-translationally, the lipidated N- and C-terminal peptides of N-product can be cleaved (shedding). The N-terminal palmitoylated peptide is cleaved at the Cardin-Weintraub (CW) motif site. The cleavage reduced the interactions with heparan sulfate. The cleavage is enhanced by SCUBE2. As to expression, expressed in the ventral midline of the neural tube and brain. In the developing brain, expression occurs in domains that include a discrete region in the floor of the diencephalon. Not detected in the notochord or developing fin bud.

The protein resides in the cell membrane. It localises to the endoplasmic reticulum membrane. Its subcellular location is the golgi apparatus membrane. The C-terminal part of the tiggy-winkle hedgehog protein precursor displays an autoproteolysis and a cholesterol transferase activity. Both activities result in the cleavage of the full-length protein into two parts (N-product and C-product) followed by the covalent attachment of a cholesterol moiety to the C-terminal of the newly generated N-product. Both activities occur in the endoplasmic reticulum. Once cleaved, the C-product is degraded in the endoplasmic reticulum. In terms of biological role, the dually lipidated tiggy-winkle hedgehog protein N-product is a morphogen which is essential for a variety of patterning events during development. Involved in dorso-ventral patterning of the brain and in early patterning of the developing eyes. Binds to the patched (PTCH1) receptor, which functions in association with smoothened (SMO), to activate the transcription of target genes. The sequence is that of Tiggy-winkle hedgehog protein (shhb) from Danio rerio (Zebrafish).